The following is a 276-amino-acid chain: Pantothenate synthetase (276 aa).

ATP is bound at residue 27–34; sequence MGALHRGH. The active-site Proton donor is the histidine 34. Glutamine 58 provides a ligand contact to (R)-pantoate. Position 58 (glutamine 58) interacts with beta-alanine. 147–150 provides a ligand contact to ATP; that stretch reads GKKD. Glutamine 153 lines the (R)-pantoate pocket. ATP contacts are provided by residues valine 176 and 184–187; that span reads LSSR.

It belongs to the pantothenate synthetase family. As to quaternary structure, homodimer.

The protein resides in the cytoplasm. It catalyses the reaction (R)-pantoate + beta-alanine + ATP = (R)-pantothenate + AMP + diphosphate + H(+). The protein operates within cofactor biosynthesis; (R)-pantothenate biosynthesis; (R)-pantothenate from (R)-pantoate and beta-alanine: step 1/1. Catalyzes the condensation of pantoate with beta-alanine in an ATP-dependent reaction via a pantoyl-adenylate intermediate. The chain is Pantothenate synthetase from Helicobacter pylori (strain G27).